Reading from the N-terminus, the 284-residue chain is Putative ribosome biogenesis protein C306.07c (284 aa).

Residues 264 to 284 (LKKSELRAQKRGSSGEGKGNK) form a disordered region.

The protein belongs to the universal ribosomal protein uL1 family. Highly divergent. In terms of assembly, component of the 90S pre-ribosomes.

It is found in the nucleus. The protein localises to the nucleolus. Involved in rRNA-processing and ribosome biosynthesis. This chain is Putative ribosome biogenesis protein C306.07c, found in Schizosaccharomyces pombe (strain 972 / ATCC 24843) (Fission yeast).